A 112-amino-acid chain; its full sequence is Seminal vesicle secretory protein 4 (112 aa).

The first 21 residues, 1–21, serve as a signal peptide directing secretion; that stretch reads MKSTSLFLCSLLLLLVTGAIG. Positions 26–112 are disordered; sequence EKYSQSEEVV…RSRFAQDVLN (87 aa). 2 stretches are compositionally biased toward low complexity: residues 36 to 47 and 85 to 97; these read SESFASGPSSGS and RSSG…GESS.

Belongs to the SVP2/SVP5/SVP6 family. In terms of tissue distribution, testis.

It localises to the secreted. The protein localises to the extracellular space. The protein is Seminal vesicle secretory protein 4 (Svs4) of Rattus norvegicus (Rat).